Here is a 359-residue protein sequence, read N- to C-terminus: Type II restriction enzyme HgiDI (359 aa).

It catalyses the reaction Endonucleolytic cleavage of DNA to give specific double-stranded fragments with terminal 5'-phosphates.. In terms of biological role, a P subtype restriction enzyme that recognizes the double-stranded sequence 5'-GRCGYC-3' and cleaves after R-2. The chain is Type II restriction enzyme HgiDI from Herpetosiphon aurantiacus (Herpetosiphon giganteus).